The following is a 170-amino-acid chain: Neurotensin/neuromedin N (170 aa).

The first 23 residues, 1–23 (MMAGMKIQLVCMILLAFSSWSLC), serve as a signal peptide directing secretion.

It belongs to the neurotensin family. Interacts with NTSR1. Interacts with SORT1. Interacts with SORL1. Neurotensin is cleaved and degraded by Angiotensin-converting enzyme (ACE) and neprilysin (MME). As to expression, brain and gut.

It is found in the secreted. The protein localises to the cytoplasmic vesicle. Its subcellular location is the secretory vesicle. In terms of biological role, neurotensin may play an endocrine or paracrine role in the regulation of fat metabolism. It causes contraction of smooth muscle. In Bos taurus (Bovine), this protein is Neurotensin/neuromedin N (NTS).